The sequence spans 319 residues: Type II methyltransferase M.MpnI (319 aa).

This sequence belongs to the N(4)/N(6)-methyltransferase family.

It carries out the reaction a 2'-deoxyadenosine in DNA + S-adenosyl-L-methionine = an N(6)-methyl-2'-deoxyadenosine in DNA + S-adenosyl-L-homocysteine + H(+). Its function is as follows. A methylase that recognizes the double-stranded sequence 5'-CTAT-3' and methylates A-3 on one strand; probably responsible for all of the methylation on this site in the genome. The sequence is that of Type II methyltransferase M.MpnI from Mycoplasma pneumoniae (strain ATCC 29342 / M129 / Subtype 1) (Mycoplasmoides pneumoniae).